The following is a 259-amino-acid chain: UPF0246 protein PFLU_0992 (259 aa).

The protein belongs to the UPF0246 family.

This is UPF0246 protein PFLU_0992 from Pseudomonas fluorescens (strain SBW25).